The following is a 128-amino-acid chain: Large ribosomal subunit protein bL12 (128 aa).

It belongs to the bacterial ribosomal protein bL12 family. In terms of assembly, homodimer. Part of the ribosomal stalk of the 50S ribosomal subunit. Forms a multimeric L10(L12)X complex, where L10 forms an elongated spine to which 2 to 4 L12 dimers bind in a sequential fashion. Binds GTP-bound translation factors.

Functionally, forms part of the ribosomal stalk which helps the ribosome interact with GTP-bound translation factors. Is thus essential for accurate translation. The sequence is that of Large ribosomal subunit protein bL12 from Acidithiobacillus ferrooxidans (strain ATCC 23270 / DSM 14882 / CIP 104768 / NCIMB 8455) (Ferrobacillus ferrooxidans (strain ATCC 23270)).